The primary structure comprises 1019 residues: UPF0182 protein Tery_0938 (1019 aa).

Transmembrane regions (helical) follow at residues 23 to 43, 67 to 87, 128 to 148, 192 to 212, 213 to 233, 270 to 290, 313 to 333, 355 to 375, and 416 to 436; these read IHIL…GFST, TETW…LVNL, LSLS…GLIL, LWLL…PILW, LSVF…SHWA, FWLI…YLLS, LGGG…FELL, YVFL…QAIF, and AILT…PKIV.

It belongs to the UPF0182 family.

The protein localises to the cell membrane. The polypeptide is UPF0182 protein Tery_0938 (Trichodesmium erythraeum (strain IMS101)).